Here is a 194-residue protein sequence, read N- to C-terminus: Fe/S biogenesis protein NfuA (194 aa).

The [4Fe-4S] cluster site is built by Cys151 and Cys154.

The protein belongs to the NfuA family. As to quaternary structure, homodimer. [4Fe-4S] cluster serves as cofactor.

Its function is as follows. Involved in iron-sulfur cluster biogenesis. Binds a 4Fe-4S cluster, can transfer this cluster to apoproteins, and thereby intervenes in the maturation of Fe/S proteins. Could also act as a scaffold/chaperone for damaged Fe/S proteins. The chain is Fe/S biogenesis protein NfuA from Mannheimia succiniciproducens (strain KCTC 0769BP / MBEL55E).